We begin with the raw amino-acid sequence, 273 residues long: Inactive endochitinase At2g43600 (273 aa).

Positions 1–22 are cleaved as a signal peptide; sequence MTIKNVIFSLFILAILAETVFS. Residues 23–61 form the Chitin-binding type-1 domain; it reads QNCMDTSCPGLKECCSRWGFCGTKDEYCGFFCFSGPCNI. 4 disulfides stabilise this stretch: C25–C37, C30–C43, C36–C50, and C54–C59. Residues 78-273 form a catalytic region; it reads GKIETVITSA…GVTPDQGLDC (196 aa). Residue N99 is glycosylated (N-linked (GlcNAc...) asparagine).

This sequence belongs to the glycosyl hydrolase 19 family. Chitinase class I subfamily.

This is Inactive endochitinase At2g43600 from Arabidopsis thaliana (Mouse-ear cress).